Reading from the N-terminus, the 329-residue chain is Delta-aminolevulinic acid dehydratase (329 aa).

Catalysis depends on K202, which acts as the Schiff-base intermediate with substrate. Residues R212 and R223 each contribute to the 5-aminolevulinate site. Position 239 (E239) interacts with Mg(2+). Residue K254 is the Schiff-base intermediate with substrate of the active site. Residues S280 and Y319 each coordinate 5-aminolevulinate.

Belongs to the ALAD family. In terms of assembly, homooctamer.

The enzyme catalyses 2 5-aminolevulinate = porphobilinogen + 2 H2O + H(+). The protein operates within porphyrin-containing compound metabolism; protoporphyrin-IX biosynthesis; coproporphyrinogen-III from 5-aminolevulinate: step 1/4. Catalyzes an early step in the biosynthesis of tetrapyrroles. Binds two molecules of 5-aminolevulinate per subunit, each at a distinct site, and catalyzes their condensation to form porphobilinogen. The chain is Delta-aminolevulinic acid dehydratase (hemB) from Mycobacterium leprae (strain TN).